Consider the following 256-residue polypeptide: 5-keto-4-deoxy-D-glucarate aldolase (256 aa).

H50 acts as the Proton acceptor in catalysis. Q151 serves as a coordination point for substrate. E153 provides a ligand contact to Mg(2+). Substrate-binding residues include S178 and D179. D179 provides a ligand contact to Mg(2+).

The protein belongs to the HpcH/HpaI aldolase family. KDGluc aldolase subfamily. Homohexamer; trimer of dimers. Requires Mg(2+) as cofactor.

The catalysed reaction is 5-dehydro-4-deoxy-D-glucarate = 2-hydroxy-3-oxopropanoate + pyruvate. The enzyme catalyses 2-dehydro-3-deoxy-D-glucarate = 2-hydroxy-3-oxopropanoate + pyruvate. It functions in the pathway carbohydrate acid metabolism; galactarate degradation; D-glycerate from galactarate: step 2/3. Its function is as follows. Catalyzes the reversible retro-aldol cleavage of both 5-keto-4-deoxy-D-glucarate and 2-keto-3-deoxy-D-glucarate to pyruvate and tartronic semialdehyde. The sequence is that of 5-keto-4-deoxy-D-glucarate aldolase from Shigella boydii serotype 4 (strain Sb227).